The chain runs to 971 residues: Piwi-like protein 2 (971 aa).

Position 45 is a symmetric dimethylarginine (R45). An Omega-N-methylarginine; by PRMT5; alternate modification is found at R74. The residue at position 74 (R74) is a Symmetric dimethylarginine; by PRMT5; alternate. At R83 the chain carries Omega-N-methylarginine; alternate. Residues R83 and R95 each carry the symmetric dimethylarginine; alternate modification. Position 95 is an omega-N-methylarginine; by PRMT5; alternate (R95). The residue at position 100 (R100) is a Symmetric dimethylarginine; by PRMT5; alternate. R100 is subject to Omega-N-methylarginine; alternate. The disordered stretch occupies residues 102 to 124; that stretch reads LSANMVRKDREEPRSSLPDPSVL. R144 and R156 each carry symmetric dimethylarginine. Residues 159-200 are disordered; the sequence is SSIGRGMDKPPSAFGLTARDPPRLPQPPALSPTSLHSADPPP. R163 is subject to Symmetric dimethylarginine; by PRMT5. Residues 387 to 500 form the PAZ domain; it reads SVLDVMHAIY…LLPELSFMTG (114 aa). Symmetric dimethylarginine; by PRMT5 is present on R549. Residues 666 to 957 enclose the Piwi domain; sequence MVVCIIMGTR…LAFLSGQILH (292 aa). Catalysis depends on residues D743, E781, D813, and H946.

It belongs to the argonaute family. Piwi subfamily. In terms of assembly, interacts with DDX4, MAEL, EIF3A, EIF4E, EIF4G, PRMT5 and WDR77. Associates with EIF4E- and EIF4G-containing m7G cap-binding complexes. Interacts (when methylated on arginine residues) with TDRD1 and TDRKH/TDRD2. Interacts with TDRD12. Component of the PET complex, at least composed of EXD1, PIWIL2, TDRD12 and piRNAs. Interacts with MOV10L1. Interacts with GPAT2. Interacts with Tex19.1 and, probably, Tex19.2. Interacts (via PIWI domain) with BMAL1 and CLOCK. Interacts with GSK3B. Interacts with TEX15. It depends on Mg(2+) as a cofactor. In terms of processing, arginine methylation by PRMT5 is required for the interaction with Tudor domain-containing protein TDRD1 and subsequent localization to the meiotic nuage, also named P granule. Expressed in adult testis, specifically in spermatocytes and in spermatogonia. Only detected in primordial germ cells of both sexes. Widely expressed in tumors. Also present at early stages of oocyte growth. Present in the mitotic spermatogonia. Not detected in the first stages of meiosis (preleptotene and leptotene). Detected at the late zygotene stage and increases throughout pachytene, declining from this stage onward until expression stops at the early round spermatid stage (at protein level).

Its subcellular location is the cytoplasm. In terms of biological role, endoribonuclease that plays a central role during spermatogenesis by repressing transposable elements and preventing their mobilization, which is essential for the germline integrity. Plays an essential role in meiotic differentiation of spermatocytes, germ cell differentiation and in self-renewal of spermatogonial stem cells. Its presence in oocytes suggests that it may participate in similar functions during oogenesis in females. Acts via the piRNA metabolic process, which mediates the repression of transposable elements during meiosis by forming complexes composed of piRNAs and Piwi proteins and govern the methylation and subsequent repression of transposons. During piRNA biosynthesis, plays a key role in the piRNA amplification loop, also named ping-pong amplification cycle, by acting as a 'slicer-competent' piRNA endoribonuclease that cleaves primary piRNAs, which are then loaded onto 'slicer-incompetent' PIWIL4. PIWIL2 slicing produces a pre-miRNA intermediate, which is then processed in mature piRNAs, and as well as a 16 nucleotide by-product that is degraded. Required for PIWIL4/MIWI2 nuclear localization and association with secondary piRNAs antisense. Besides their function in transposable elements repression, piRNAs are probably involved in other processes during meiosis such as translation regulation. Indirectly modulates expression of genes such as PDGFRB, SLC2A1, ITGA6, GJA7, THY1, CD9 and STRA8. Represses circadian rhythms by promoting the stability and activity of core clock components BMAL1 and CLOCK by inhibiting GSK3B-mediated phosphorylation and ubiquitination-dependent degradation of these proteins. This is Piwi-like protein 2 from Mus musculus (Mouse).